The sequence spans 133 residues: Interleukin-5 (133 aa).

A signal peptide spans 1 to 20 (MRRMLLHLSVLTLSCVWATA). Asn46, Asn75, and Asn89 each carry an N-linked (GlcNAc...) asparagine glycan.

The protein belongs to the IL-5 family. Homodimer; disulfide-linked. Interacts with IL5RA. Interacts with CSF2RB. In terms of tissue distribution, expressed in lymphoid cells, including spleen, thymus, lymph nodes and peripheral blood mononuclear cells.

Its subcellular location is the secreted. In terms of biological role, homodimeric cytokine expressed predominantly by T-lymphocytes and NK cells that plays an important role in the survival, differentiation, and chemotaxis of eosinophils. Also acts on activated and resting B-cells to induce immunoglobulin production, growth, and differentiation. Mechanistically, exerts its biological effects through a receptor composed of IL5RA subunit and the cytokine receptor common subunit beta/CSF2RB. Binding to the receptor leads to activation of various kinases including LYN, SYK and JAK2 and thereby propagates signals through the RAS-MAPK and JAK-STAT5 pathways respectively. This is Interleukin-5 (Il5) from Mus musculus (Mouse).